Reading from the N-terminus, the 128-residue chain is UPF0325 protein YaeH (128 aa).

This sequence belongs to the UPF0325 family.

The sequence is that of UPF0325 protein YaeH from Escherichia coli (strain ATCC 8739 / DSM 1576 / NBRC 3972 / NCIMB 8545 / WDCM 00012 / Crooks).